The chain runs to 155 residues: Small ribosomal subunit protein uS7 (155 aa).

It belongs to the universal ribosomal protein uS7 family. As to quaternary structure, part of the 30S ribosomal subunit. Contacts proteins S9 and S11.

One of the primary rRNA binding proteins, it binds directly to 16S rRNA where it nucleates assembly of the head domain of the 30S subunit. Is located at the subunit interface close to the decoding center, probably blocks exit of the E-site tRNA. The sequence is that of Small ribosomal subunit protein uS7 from Chlorobium phaeovibrioides (strain DSM 265 / 1930) (Prosthecochloris vibrioformis (strain DSM 265)).